The sequence spans 242 residues: Myogenic factor 6 (242 aa).

The segment at 31–63 (SPLYPGSDGTLSPCQDQMPPEAGSDSSGEEHVL) is disordered. The 52-residue stretch at 93 to 144 (DRRKAATLRERRRLKKINEAFEALKRRTVANPNQRLPKVEILRSAINYIERL) folds into the bHLH domain.

In terms of assembly, efficient DNA binding requires dimerization with another bHLH protein. Interacts with CSRP3.

It is found in the nucleus. Functionally, involved in muscle differentiation (myogenic factor). Induces fibroblasts to differentiate into myoblasts. Probable sequence specific DNA-binding protein. The sequence is that of Myogenic factor 6 (MYF6) from Bos taurus (Bovine).